The following is a 265-amino-acid chain: Aliphatic sulfonates import ATP-binding protein SsuB 1 (265 aa).

The 225-residue stretch at 31–255 (FAFKGVEKRF…RRGSAELARL (225 aa)) folds into the ABC transporter domain. 63–70 (GKSGCGKS) contacts ATP.

The protein belongs to the ABC transporter superfamily. Aliphatic sulfonates importer (TC 3.A.1.17.2) family. As to quaternary structure, the complex is composed of two ATP-binding proteins (SsuB), two transmembrane proteins (SsuC) and a solute-binding protein (SsuA).

It is found in the cell inner membrane. It catalyses the reaction ATP + H2O + aliphatic sulfonate-[sulfonate-binding protein]Side 1 = ADP + phosphate + aliphatic sulfonateSide 2 + [sulfonate-binding protein]Side 1.. Its function is as follows. Part of the ABC transporter complex SsuABC involved in aliphatic sulfonates import. Responsible for energy coupling to the transport system. The chain is Aliphatic sulfonates import ATP-binding protein SsuB 1 from Mesorhizobium japonicum (strain LMG 29417 / CECT 9101 / MAFF 303099) (Mesorhizobium loti (strain MAFF 303099)).